A 322-amino-acid chain; its full sequence is Undecaprenyl-phosphate 4-deoxy-4-formamido-L-arabinose transferase (322 aa).

The Cytoplasmic portion of the chain corresponds to 1–235 (MFEIHPVKKV…TCLTTTPLRM (235 aa)). A helical membrane pass occupies residues 236–256 (LSLLGSIIAIGGFSIAVLLVI). Topologically, residues 257-269 (LRLTFGPQWAAEG) are periplasmic. Residues 270–290 (VFMLFAVLFTFIGAQFIGMGL) traverse the membrane as a helical segment. Residues 291–322 (LGEYIGRIYTDVRARPRYFVQQVIRPSSKENE) lie on the Cytoplasmic side of the membrane.

This sequence belongs to the glycosyltransferase 2 family.

The protein localises to the cell inner membrane. It carries out the reaction UDP-4-deoxy-4-formamido-beta-L-arabinose + di-trans,octa-cis-undecaprenyl phosphate = 4-deoxy-4-formamido-alpha-L-arabinopyranosyl di-trans,octa-cis-undecaprenyl phosphate + UDP. Its pathway is glycolipid biosynthesis; 4-amino-4-deoxy-alpha-L-arabinose undecaprenyl phosphate biosynthesis; 4-amino-4-deoxy-alpha-L-arabinose undecaprenyl phosphate from UDP-4-deoxy-4-formamido-beta-L-arabinose and undecaprenyl phosphate: step 1/2. It functions in the pathway bacterial outer membrane biogenesis; lipopolysaccharide biosynthesis. Its function is as follows. Catalyzes the transfer of 4-deoxy-4-formamido-L-arabinose from UDP to undecaprenyl phosphate. The modified arabinose is attached to lipid A and is required for resistance to polymyxin and cationic antimicrobial peptides. The sequence is that of Undecaprenyl-phosphate 4-deoxy-4-formamido-L-arabinose transferase from Escherichia coli (strain SMS-3-5 / SECEC).